The primary structure comprises 276 residues: Probable transposase for insertion sequence element IS702 (276 aa).

The DDE Tnp4 domain occupies Met-118 to Arg-256. Residues Asp-119, Asp-170, Asp-190, and Glu-234 each coordinate a divalent metal cation.

The protein belongs to the transposase 11 family. A divalent metal cation is required as a cofactor.

In terms of biological role, involved in the transposition of the insertion sequence. The polypeptide is Probable transposase for insertion sequence element IS702 (Microchaete diplosiphon (Fremyella diplosiphon)).